Consider the following 101-residue polypeptide: Small ribosomal subunit protein bS6 (101 aa).

The protein belongs to the bacterial ribosomal protein bS6 family. As to quaternary structure, part of the 30S ribosomal subunit. Forms a tight heterodimer with protein bS18.

Its function is as follows. Located on the outer edge of the platform on the body of the 30S subunit. This chain is Small ribosomal subunit protein bS6 (rpsF), found in Thermus thermophilus (strain ATCC BAA-163 / DSM 7039 / HB27).